A 232-amino-acid chain; its full sequence is Large ribosomal subunit protein uL1 (232 aa).

The protein belongs to the universal ribosomal protein uL1 family. As to quaternary structure, part of the 50S ribosomal subunit.

In terms of biological role, binds directly to 23S rRNA. The L1 stalk is quite mobile in the ribosome, and is involved in E site tRNA release. Functionally, protein L1 is also a translational repressor protein, it controls the translation of the L11 operon by binding to its mRNA. The protein is Large ribosomal subunit protein uL1 of Xanthomonas oryzae pv. oryzae (strain KACC10331 / KXO85).